Here is a 280-residue protein sequence, read N- to C-terminus: Diaminopimelate epimerase (280 aa).

Residues asparagine 13 and asparagine 67 each contribute to the substrate site. Cysteine 76 (proton donor) is an active-site residue. Substrate is bound by residues 77–78 (GN), asparagine 191, and 208–209 (ER). Residue cysteine 218 is the Proton acceptor of the active site. 219 to 220 (GT) is a binding site for substrate.

The protein belongs to the diaminopimelate epimerase family. Homodimer.

The protein resides in the cytoplasm. The enzyme catalyses (2S,6S)-2,6-diaminopimelate = meso-2,6-diaminopimelate. Its pathway is amino-acid biosynthesis; L-lysine biosynthesis via DAP pathway; DL-2,6-diaminopimelate from LL-2,6-diaminopimelate: step 1/1. Functionally, catalyzes the stereoinversion of LL-2,6-diaminopimelate (L,L-DAP) to meso-diaminopimelate (meso-DAP), a precursor of L-lysine. The sequence is that of Diaminopimelate epimerase from Archaeoglobus fulgidus (strain ATCC 49558 / DSM 4304 / JCM 9628 / NBRC 100126 / VC-16).